A 99-amino-acid polypeptide reads, in one-letter code: Single insulin-like growth factor-binding domain protein-2 (99 aa).

The first 18 residues, 1–18 (MESLFIFAFGMMLSSASA), serve as a signal peptide directing secretion. An IGFBP N-terminal domain is found at 19 to 98 (LSCIPCVPEE…GQEVGRCRKK (80 aa)). A glycan (O-linked (GalNAc...) serine) is linked at serine 20. 6 disulfide bridges follow: cysteine 21–cysteine 44, cysteine 24–cysteine 46, cysteine 29–cysteine 47, cysteine 35–cysteine 50, cysteine 58–cysteine 74, and cysteine 68–cysteine 95.

In terms of tissue distribution, expressed in hemocytes.

The protein localises to the secreted. Functionally, has a role in the innate immune system. This chain is Single insulin-like growth factor-binding domain protein-2, found in Cupiennius salei (American wandering spider).